Here is a 441-residue protein sequence, read N- to C-terminus: MQSRKLYKSLYFQVIVAIICGVLLGHFMPDSGTAMKPLGDGFIKLVKMMITPIIFCTVVVGIAGMEDMKKVGRVGGKALLYFEVVTTLALIIGLVVVNVLKPGAGMNVDPATLDTGAIAKYTAKAGEQSVVDFVLHIIPNSVVGAFAEGEILQVLLFSVLFGFALSMMGQSGKPVVKLVEDISHALFAAIGFIMKLAPIGAFGAMAFTIGKYGVSSLSSLAALMGSFYLTCLLFIGLVLGTITRFCGFSIWKLVRYIKEELLIVLGTSSSESALPRLMAKLEQLGCQKSVVGLVVPTGYSFNLDGTSIYLTMAAIFIAQACGIELTLTQELTIIGVLLLTSKGAAGVTGSGFITLAATLATVPDIPVAGLALILGIDRFMSEARALTNLVGNTVATVVVAKWENALDSDKLAAELHNPTPLAHGLKVEAPHLTREVSRTLS.

The next 8 membrane-spanning stretches (helical) occupy residues 9–29, 45–65, 79–99, 145–165, 187–207, 220–240, 308–328, and 356–376; these read SLYFQVIVAIICGVLLGHFMP, LVKMMITPIIFCTVVVGIAGM, LLYFEVVTTLALIIGLVVVNV, AFAEGEILQVLLFSVLFGFAL, FAAIGFIMKLAPIGAFGAMAF, LAALMGSFYLTCLLFIGLVLG, IYLTMAAIFIAQACGIELTLT, and AATLATVPDIPVAGLALILGI.

It belongs to the dicarboxylate/amino acid:cation symporter (DAACS) (TC 2.A.23) family.

Its subcellular location is the cell inner membrane. In terms of biological role, responsible for the transport of dicarboxylates such as succinate, fumarate, and malate from the periplasm across the membrane. The sequence is that of C4-dicarboxylate transport protein from Laribacter hongkongensis (strain HLHK9).